Consider the following 340-residue polypeptide: 4-hydroxy-3-methylbut-2-enyl diphosphate reductase (340 aa).

[4Fe-4S] cluster is bound at residue Cys-13. His-42 and His-75 together coordinate (2E)-4-hydroxy-3-methylbut-2-enyl diphosphate. Dimethylallyl diphosphate contacts are provided by His-42 and His-75. Isopentenyl diphosphate-binding residues include His-42 and His-75. Cys-97 serves as a coordination point for [4Fe-4S] cluster. His-125 is a binding site for (2E)-4-hydroxy-3-methylbut-2-enyl diphosphate. Dimethylallyl diphosphate is bound at residue His-125. His-125 is an isopentenyl diphosphate binding site. The active-site Proton donor is Glu-127. Residue Thr-165 participates in (2E)-4-hydroxy-3-methylbut-2-enyl diphosphate binding. Cys-195 is a [4Fe-4S] cluster binding site. Residues Ser-223, Ser-224, Asn-225, and Ser-267 each coordinate (2E)-4-hydroxy-3-methylbut-2-enyl diphosphate. 4 residues coordinate dimethylallyl diphosphate: Ser-223, Ser-224, Asn-225, and Ser-267. Isopentenyl diphosphate contacts are provided by Ser-223, Ser-224, Asn-225, and Ser-267. Positions 317–340 are disordered; that stretch reads NNLDNKTAASEEADSLSNDTEQEA. Residues 331 to 340 show a composition bias toward polar residues; sequence SLSNDTEQEA.

The protein belongs to the IspH family. [4Fe-4S] cluster is required as a cofactor.

It carries out the reaction isopentenyl diphosphate + 2 oxidized [2Fe-2S]-[ferredoxin] + H2O = (2E)-4-hydroxy-3-methylbut-2-enyl diphosphate + 2 reduced [2Fe-2S]-[ferredoxin] + 2 H(+). The catalysed reaction is dimethylallyl diphosphate + 2 oxidized [2Fe-2S]-[ferredoxin] + H2O = (2E)-4-hydroxy-3-methylbut-2-enyl diphosphate + 2 reduced [2Fe-2S]-[ferredoxin] + 2 H(+). It functions in the pathway isoprenoid biosynthesis; dimethylallyl diphosphate biosynthesis; dimethylallyl diphosphate from (2E)-4-hydroxy-3-methylbutenyl diphosphate: step 1/1. The protein operates within isoprenoid biosynthesis; isopentenyl diphosphate biosynthesis via DXP pathway; isopentenyl diphosphate from 1-deoxy-D-xylulose 5-phosphate: step 6/6. Functionally, catalyzes the conversion of 1-hydroxy-2-methyl-2-(E)-butenyl 4-diphosphate (HMBPP) into a mixture of isopentenyl diphosphate (IPP) and dimethylallyl diphosphate (DMAPP). Acts in the terminal step of the DOXP/MEP pathway for isoprenoid precursor biosynthesis. In Zymomonas mobilis subsp. mobilis (strain ATCC 31821 / ZM4 / CP4), this protein is 4-hydroxy-3-methylbut-2-enyl diphosphate reductase.